The chain runs to 185 residues: MSLEQVIKEIEQSQEIKKKEILENTKNILDKMEAEKKAKIDEIRALYQEKMRAESSRITASIIDKANIEARSILRNKIEEILEGYVSAAQEILRNIRNMPEYPALLNKMIEVAKKYLGQDCIIKVDSKDKAVAPSSGITYSNIDPYGGILASSRDGKVELDLRVSSIMEEVLEKIKVKIYTRLEE.

It belongs to the V-ATPase E subunit family. As to quaternary structure, has multiple subunits with at least A(3), B(3), C, D, E, F, H, I and proteolipid K(x).

It localises to the cell membrane. Functionally, component of the A-type ATP synthase that produces ATP from ADP in the presence of a proton gradient across the membrane. The protein is A-type ATP synthase subunit E of Thermoplasma volcanium (strain ATCC 51530 / DSM 4299 / JCM 9571 / NBRC 15438 / GSS1).